The primary structure comprises 216 residues: Probable nicotinate-nucleotide adenylyltransferase (216 aa).

It belongs to the NadD family.

It carries out the reaction nicotinate beta-D-ribonucleotide + ATP + H(+) = deamido-NAD(+) + diphosphate. Its pathway is cofactor biosynthesis; NAD(+) biosynthesis; deamido-NAD(+) from nicotinate D-ribonucleotide: step 1/1. Its function is as follows. Catalyzes the reversible adenylation of nicotinate mononucleotide (NaMN) to nicotinic acid adenine dinucleotide (NaAD). This chain is Probable nicotinate-nucleotide adenylyltransferase, found in Shewanella pealeana (strain ATCC 700345 / ANG-SQ1).